We begin with the raw amino-acid sequence, 517 residues long: Putative thymidine phosphorylase (517 aa).

This sequence belongs to the thymidine/pyrimidine-nucleoside phosphorylase family. Type 2 subfamily.

The enzyme catalyses thymidine + phosphate = 2-deoxy-alpha-D-ribose 1-phosphate + thymine. In Legionella pneumophila (strain Paris), this protein is Putative thymidine phosphorylase.